The chain runs to 196 residues: ATP-dependent Clp protease proteolytic subunit (196 aa).

Ser98 acts as the Nucleophile in catalysis. His123 is a catalytic residue.

Belongs to the peptidase S14 family. In terms of assembly, fourteen ClpP subunits assemble into 2 heptameric rings which stack back to back to give a disk-like structure with a central cavity, resembling the structure of eukaryotic proteasomes.

The protein localises to the cytoplasm. It carries out the reaction Hydrolysis of proteins to small peptides in the presence of ATP and magnesium. alpha-casein is the usual test substrate. In the absence of ATP, only oligopeptides shorter than five residues are hydrolyzed (such as succinyl-Leu-Tyr-|-NHMec, and Leu-Tyr-Leu-|-Tyr-Trp, in which cleavage of the -Tyr-|-Leu- and -Tyr-|-Trp bonds also occurs).. In terms of biological role, cleaves peptides in various proteins in a process that requires ATP hydrolysis. Has a chymotrypsin-like activity. Plays a major role in the degradation of misfolded proteins. The chain is ATP-dependent Clp protease proteolytic subunit from Sulfurimonas denitrificans (strain ATCC 33889 / DSM 1251) (Thiomicrospira denitrificans (strain ATCC 33889 / DSM 1251)).